We begin with the raw amino-acid sequence, 592 residues long: A-type ATP synthase subunit A (592 aa).

ATP is bound at residue Gly-234–Thr-241.

Belongs to the ATPase alpha/beta chains family. Has multiple subunits with at least A(3), B(3), C, D, E, F, H, I and proteolipid K(x).

It is found in the cell membrane. It carries out the reaction ATP + H2O + 4 H(+)(in) = ADP + phosphate + 5 H(+)(out). Functionally, component of the A-type ATP synthase that produces ATP from ADP in the presence of a proton gradient across the membrane. The A chain is the catalytic subunit. The chain is A-type ATP synthase subunit A from Nitrosopumilus maritimus (strain SCM1).